The following is a 116-amino-acid chain: Large ribosomal subunit protein eL30 (116 aa).

Belongs to the eukaryotic ribosomal protein eL30 family. As to quaternary structure, component of the large ribosomal subunit.

It localises to the cytoplasm. Functionally, component of the large ribosomal subunit. The ribosome is a large ribonucleoprotein complex responsible for the synthesis of proteins in the cell. The protein is Large ribosomal subunit protein eL30 (rpl30) of Ictalurus punctatus (Channel catfish).